Reading from the N-terminus, the 476-residue chain is Angiotensinogen (476 aa).

A signal peptide spans 1 to 24 (MAPAGVSLRATILCLLAWAGLAAG). D25 is subject to Beta-decarboxylated aspartate; in form angiotensin-A. N-linked (GlcNAc...) asparagine glycans are attached at residues N38, N161, N295, and N319. The cysteines at positions 42 and 162 are disulfide-linked.

Belongs to the serpin family. As to quaternary structure, during pregnancy, exists as a disulfide-linked 2:2 heterotetramer with the proform of PRG2 and as a complex (probably a 2:2:2 heterohexamer) with pro-PRG2 and C3dg. Post-translationally, beta-decarboxylation of Asp-25 in angiotensin-2, by mononuclear leukocytes produces alanine. The resulting peptide form, angiotensin-A, has the same affinity for the AT1 receptor as angiotensin-2, but a higher affinity for the AT2 receptor. In terms of processing, in response to low blood pressure, the enzyme renin/REN cleaves angiotensinogen to produce angiotensin-1. Angiotensin-1 is a substrate of ACE (angiotensin converting enzyme) that removes a dipeptide to yield the physiologically active peptide angiotensin-2. Angiotensin-1 and angiotensin-2 can be further processed to generate angiotensin-3, angiotensin-4. Angiotensin 1-9 is cleaved from angiotensin-1 by ACE2 and can be further processed by ACE to produce angiotensin 1-7, angiotensin 1-5 and angiotensin 1-4. Angiotensin 1-7 has also been proposed to be cleaved from angiotensin-2 by ACE2 or from angiotensin-1 by MME (neprilysin). The disulfide bond is labile. Angiotensinogen is present in the circulation in a near 40:60 ratio with the oxidized disulfide-bonded form, which preferentially interacts with receptor-bound renin. As to expression, expressed by the liver and secreted in plasma.

The protein localises to the secreted. Its function is as follows. Essential component of the renin-angiotensin system (RAS), a potent regulator of blood pressure, body fluid and electrolyte homeostasis. In terms of biological role, acts directly on vascular smooth muscle as a potent vasoconstrictor, affects cardiac contractility and heart rate through its action on the sympathetic nervous system, and alters renal sodium and water absorption through its ability to stimulate the zona glomerulosa cells of the adrenal cortex to synthesize and secrete aldosterone. Acts by binding to angiotensin receptors AGTR1 and AGTR2. Also binds the DEAR/FBXW7-AS1 receptor. Stimulates aldosterone release. Functionally, is a ligand for the G-protein coupled receptor MAS1. Has vasodilator and antidiuretic effects. Has an antithrombotic effect that involves MAS1-mediated release of nitric oxide from platelets. This is Angiotensinogen from Homo sapiens (Human).